The following is an 856-amino-acid chain: Structure-specific endonuclease subunit SLX4 (856 aa).

A compositionally biased stretch (polar residues) spans 1 to 19 (MDNAAIASQSNTPPSNGRS). Disordered stretches follow at residues 1 to 24 (MDNA…ARFV), 39 to 61 (IEPS…SKSP), 88 to 121 (VDSP…HKMA), 139 to 201 (KTRK…TDNE), 296 to 326 (GIQT…KKPQ), 362 to 392 (KKMG…GNGP), 621 to 640 (SKSS…SQGD), 653 to 688 (RSDS…SNEG), and 715 to 742 (DSVG…QDCD). Over residues 51-60 (STLLTSLSKS) the composition is skewed to low complexity. Over residues 139–152 (KTRKKKAATAKRTR) the composition is skewed to basic residues. Residues 296 to 309 (GIQTPTESRPATND) are compositionally biased toward polar residues. Residues 673–686 (SVKSQESKSFSLSN) are compositionally biased toward polar residues.

Belongs to the SLX4 family. In terms of assembly, forms a heterodimer with SLX1. Phosphorylated in response to DNA damage.

It localises to the nucleus. Its function is as follows. Regulatory subunit of the SLX1-SLX4 structure-specific endonuclease that resolves DNA secondary structures generated during DNA repair and recombination. Has endonuclease activity towards branched DNA substrates, introducing single-strand cuts in duplex DNA close to junctions with ss-DNA. In Ajellomyces dermatitidis (strain ER-3 / ATCC MYA-2586) (Blastomyces dermatitidis), this protein is Structure-specific endonuclease subunit SLX4.